The following is a 296-amino-acid chain: MYLQLLKSLNRLHPRAWDFVQLSRMDRPIGIYLLLWPTLSAVWIAGNGSPTLANVLIFGLGVVLMRAAGCCINDFADRKVDGHVKRTADRPLASGRVRPREALALFAMLVGVSFLLVLCTNSRTVWLSFGAVALAFCYPFMKRYTYYPQVVLGAAYSWGIPMAFTAAGGELPASAWLLYIANLLWTVGYDTYYAMVDRDDDLKIGVKSTAILFGDADRNIILTLQLLSLGCLLLAGSRFDLGGWFHLGLLGAAACFAWEYWSTRKLDRESCFKAFLHNHWAGLLVFIGVVLDYAFR.

8 helical membrane-spanning segments follow: residues 28-48 (PIGI…AGNG), 52-72 (LANV…GCCI), 102-122 (ALAL…CTNS), 145-167 (TYYP…FTAA), 174-196 (SAWL…YAMV), 219-239 (NIIL…GSRF), 241-261 (LGGW…WEYW), and 275-295 (FLHN…DYAF).

This sequence belongs to the UbiA prenyltransferase family. Mg(2+) is required as a cofactor.

It is found in the cell inner membrane. The enzyme catalyses all-trans-octaprenyl diphosphate + 4-hydroxybenzoate = 4-hydroxy-3-(all-trans-octaprenyl)benzoate + diphosphate. It functions in the pathway cofactor biosynthesis; ubiquinone biosynthesis. Catalyzes the prenylation of para-hydroxybenzoate (PHB) with an all-trans polyprenyl group. Mediates the second step in the final reaction sequence of ubiquinone-8 (UQ-8) biosynthesis, which is the condensation of the polyisoprenoid side chain with PHB, generating the first membrane-bound Q intermediate 3-octaprenyl-4-hydroxybenzoate. This Pseudomonas putida (strain GB-1) protein is 4-hydroxybenzoate octaprenyltransferase.